Here is a 245-residue protein sequence, read N- to C-terminus: 1-(5-phosphoribosyl)-5-[(5-phosphoribosylamino)methylideneamino] imidazole-4-carboxamide isomerase (245 aa).

Asp-8 serves as the catalytic Proton acceptor. Asp-130 (proton donor) is an active-site residue.

This sequence belongs to the HisA/HisF family.

The protein resides in the cytoplasm. The catalysed reaction is 1-(5-phospho-beta-D-ribosyl)-5-[(5-phospho-beta-D-ribosylamino)methylideneamino]imidazole-4-carboxamide = 5-[(5-phospho-1-deoxy-D-ribulos-1-ylimino)methylamino]-1-(5-phospho-beta-D-ribosyl)imidazole-4-carboxamide. It functions in the pathway amino-acid biosynthesis; L-histidine biosynthesis; L-histidine from 5-phospho-alpha-D-ribose 1-diphosphate: step 4/9. The chain is 1-(5-phosphoribosyl)-5-[(5-phosphoribosylamino)methylideneamino] imidazole-4-carboxamide isomerase from Pseudomonas entomophila (strain L48).